The primary structure comprises 551 residues: Cytosolic Fe-S cluster assembly factor NAR1 (551 aa).

Positions 20, 57, 60, 63, 178, and 242 each coordinate [4Fe-4S] cluster. The segment at 395–435 (DPSGHKKRSVRRVAALRSRGRKDSSSEDSTGTPSAISNALG) is disordered. The segment covering 421 to 431 (EDSTGTPSAIS) has biased composition (polar residues). Residue cysteine 451 coordinates [4Fe-4S] cluster.

This sequence belongs to the NARF family.

Functionally, component of the cytosolic Fe/S protein assembly machinery. Required for maturation of extramitochondrial Fe/S proteins. May play a role in the transfer of pre-assembled Fe/S clusters to target apoproteins. This is Cytosolic Fe-S cluster assembly factor NAR1 (NAR1) from Candida glabrata (strain ATCC 2001 / BCRC 20586 / JCM 3761 / NBRC 0622 / NRRL Y-65 / CBS 138) (Yeast).